The primary structure comprises 103 residues: Ig kappa-b4 chain C region (103 aa).

Residues 5–95 (PTVLIFPPAA…KVTQGTTSVV (91 aa)) form the Ig-like domain. A disulfide bridge links Cys26 with Cys85.

In Oryctolagus cuniculus (Rabbit), this protein is Ig kappa-b4 chain C region.